The sequence spans 542 residues: Chaperonin GroEL 1 (542 aa).

ATP contacts are provided by residues 29-32 (TLGP), 86-90 (DGTTT), G413, 477-479 (NAA), and D493.

This sequence belongs to the chaperonin (HSP60) family. Forms a cylinder of 14 subunits composed of two heptameric rings stacked back-to-back. Interacts with the co-chaperonin GroES.

Its subcellular location is the cytoplasm. It carries out the reaction ATP + H2O + a folded polypeptide = ADP + phosphate + an unfolded polypeptide.. In terms of biological role, together with its co-chaperonin GroES, plays an essential role in assisting protein folding. The GroEL-GroES system forms a nano-cage that allows encapsulation of the non-native substrate proteins and provides a physical environment optimized to promote and accelerate protein folding. This chain is Chaperonin GroEL 1, found in Renibacterium salmoninarum (strain ATCC 33209 / DSM 20767 / JCM 11484 / NBRC 15589 / NCIMB 2235).